Here is a 122-residue protein sequence, read N- to C-terminus: Large ribosomal subunit protein bL12 (122 aa).

Belongs to the bacterial ribosomal protein bL12 family. In terms of assembly, homodimer. Part of the ribosomal stalk of the 50S ribosomal subunit. Forms a multimeric L10(L12)X complex, where L10 forms an elongated spine to which 2 to 4 L12 dimers bind in a sequential fashion. Binds GTP-bound translation factors.

In terms of biological role, forms part of the ribosomal stalk which helps the ribosome interact with GTP-bound translation factors. Is thus essential for accurate translation. The protein is Large ribosomal subunit protein bL12 of Bdellovibrio bacteriovorus (strain ATCC 15356 / DSM 50701 / NCIMB 9529 / HD100).